The following is a 598-amino-acid chain: 2-succinyl-5-enolpyruvyl-6-hydroxy-3-cyclohexene-1-carboxylate synthase (598 aa).

It belongs to the TPP enzyme family. MenD subfamily. In terms of assembly, homodimer. Mg(2+) is required as a cofactor. The cofactor is Mn(2+). Thiamine diphosphate serves as cofactor.

It catalyses the reaction isochorismate + 2-oxoglutarate + H(+) = 5-enolpyruvoyl-6-hydroxy-2-succinyl-cyclohex-3-ene-1-carboxylate + CO2. It participates in quinol/quinone metabolism; 1,4-dihydroxy-2-naphthoate biosynthesis; 1,4-dihydroxy-2-naphthoate from chorismate: step 2/7. It functions in the pathway cofactor biosynthesis; phylloquinone biosynthesis. Catalyzes the thiamine diphosphate-dependent decarboxylation of 2-oxoglutarate and the subsequent addition of the resulting succinic semialdehyde-thiamine pyrophosphate anion to isochorismate to yield 2-succinyl-5-enolpyruvyl-6-hydroxy-3-cyclohexene-1-carboxylate (SEPHCHC). This is 2-succinyl-5-enolpyruvyl-6-hydroxy-3-cyclohexene-1-carboxylate synthase from Prochlorococcus marinus (strain NATL2A).